The sequence spans 167 residues: Large ribosomal subunit protein uL10 (167 aa).

Belongs to the universal ribosomal protein uL10 family. In terms of assembly, part of the ribosomal stalk of the 50S ribosomal subunit. The N-terminus interacts with L11 and the large rRNA to form the base of the stalk. The C-terminus forms an elongated spine to which L12 dimers bind in a sequential fashion forming a multimeric L10(L12)X complex.

Functionally, forms part of the ribosomal stalk, playing a central role in the interaction of the ribosome with GTP-bound translation factors. This chain is Large ribosomal subunit protein uL10, found in Dichelobacter nodosus (strain VCS1703A).